A 75-amino-acid chain; its full sequence is Exodeoxyribonuclease 7 small subunit (75 aa).

This sequence belongs to the XseB family. In terms of assembly, heterooligomer composed of large and small subunits.

Its subcellular location is the cytoplasm. The enzyme catalyses Exonucleolytic cleavage in either 5'- to 3'- or 3'- to 5'-direction to yield nucleoside 5'-phosphates.. Functionally, bidirectionally degrades single-stranded DNA into large acid-insoluble oligonucleotides, which are then degraded further into small acid-soluble oligonucleotides. In Chlamydia felis (strain Fe/C-56) (Chlamydophila felis), this protein is Exodeoxyribonuclease 7 small subunit.